Consider the following 99-residue polypeptide: METLSFEFPAGQPGRGRALVGCVGSGDLEVLLEPGQPGKLSIQVQTSVNGSASRWQHLFERLFDGQTPPALLIDIHDFGATPGVVRLRLEQGFEEIGHD.

Serine 25 is modified (O-(phosphoribosyl dephospho-coenzyme A)serine).

Belongs to the MdcC family. Covalently binds the prosthetic group of malonate decarboxylase.

It is found in the cytoplasm. Functionally, subunit of malonate decarboxylase, it is an acyl carrier protein to which acetyl and malonyl thioester residues are bound via a 2'-(5''-phosphoribosyl)-3'-dephospho-CoA prosthetic group and turn over during the catalytic mechanism. The sequence is that of Malonate decarboxylase acyl carrier protein from Pseudomonas fluorescens (strain ATCC BAA-477 / NRRL B-23932 / Pf-5).